We begin with the raw amino-acid sequence, 256 residues long: Phosphonates import ATP-binding protein PhnC (256 aa).

The ABC transporter domain maps to 7-251 (IEMKNVTKVY…VFDNIYNGGK (245 aa)). 40–47 (GLSGAGKS) is a binding site for ATP.

This sequence belongs to the ABC transporter superfamily. Phosphonates importer (TC 3.A.1.9.1) family. The complex is composed of two ATP-binding proteins (PhnC), two transmembrane proteins (PhnE) and a solute-binding protein (PhnD).

Its subcellular location is the cell membrane. It carries out the reaction phosphonate(out) + ATP + H2O = phosphonate(in) + ADP + phosphate + H(+). Functionally, part of the ABC transporter complex PhnCDE involved in phosphonates import. Responsible for energy coupling to the transport system. The chain is Phosphonates import ATP-binding protein PhnC from Lactobacillus delbrueckii subsp. bulgaricus (strain ATCC 11842 / DSM 20081 / BCRC 10696 / JCM 1002 / NBRC 13953 / NCIMB 11778 / NCTC 12712 / WDCM 00102 / Lb 14).